The chain runs to 385 residues: Initiation-specific alpha-1,6-mannosyltransferase (385 aa).

Residues 1-15 (MLQLREPQMVHKHLK) lie on the Cytoplasmic side of the membrane. Residues 16 to 36 (LAVLGIVVIFTTYFIISSLSS) traverse the membrane as a helical; Signal-anchor for type II membrane protein segment. The Lumenal portion of the chain corresponds to 37–385 (PTSTHKTEYN…KDDGMPEMEQ (349 aa)). The DXD motif signature appears at 189 to 191 (DID).

The protein belongs to the glycosyltransferase 32 family. Mn(2+) serves as cofactor.

The protein resides in the endoplasmic reticulum membrane. It is found in the golgi apparatus membrane. It carries out the reaction Transfers an alpha-D-mannosyl residue from GDP-mannose into lipid-linked oligosaccharide, forming an alpha-(1-&gt;6)-D-mannosyl-D-mannose linkage.. Functionally, mannosyltransferase involved in outer chain elongation of asparagine-linked oligosaccharides of the type Man(9)GlcNAc(2). Adds the first alpha-1,6-mannose to the Man(8)GlcNAc(2) and Man(9)GlcNAc(2), but not Man(5)GlcNAc(2), endoplasmic reticulum intermediates. Represents the first enzymatic event required for synthesis of outer chain mannose linkages on yeast secretory proteins. N-glycan outer chain epitopes play a crucial role in the host-fungal interaction, virulence, and host immune response such as interleukin synthesis or phagocytosis by neutrophils. In Candida albicans (strain SC5314 / ATCC MYA-2876) (Yeast), this protein is Initiation-specific alpha-1,6-mannosyltransferase.